The chain runs to 69 residues: Putative membrane protein insertion efficiency factor (69 aa).

This sequence belongs to the UPF0161 family.

It localises to the cell membrane. Its function is as follows. Could be involved in insertion of integral membrane proteins into the membrane. The polypeptide is Putative membrane protein insertion efficiency factor (Clostridium botulinum (strain Kyoto / Type A2)).